A 436-amino-acid chain; its full sequence is Histidine--tRNA ligase 1 (436 aa).

It belongs to the class-II aminoacyl-tRNA synthetase family. Homodimer.

Its subcellular location is the cytoplasm. It carries out the reaction tRNA(His) + L-histidine + ATP = L-histidyl-tRNA(His) + AMP + diphosphate + H(+). This Bacillus cereus (strain ATCC 10987 / NRS 248) protein is Histidine--tRNA ligase 1.